Reading from the N-terminus, the 118-residue chain is Large ribosomal subunit protein uL22 (118 aa).

The protein belongs to the universal ribosomal protein uL22 family. In terms of assembly, part of the 50S ribosomal subunit.

This protein binds specifically to 23S rRNA; its binding is stimulated by other ribosomal proteins, e.g. L4, L17, and L20. It is important during the early stages of 50S assembly. It makes multiple contacts with different domains of the 23S rRNA in the assembled 50S subunit and ribosome. Functionally, the globular domain of the protein is located near the polypeptide exit tunnel on the outside of the subunit, while an extended beta-hairpin is found that lines the wall of the exit tunnel in the center of the 70S ribosome. This Leuconostoc citreum (strain KM20) protein is Large ribosomal subunit protein uL22.